The primary structure comprises 211 residues: uncharacterized protein (211 aa).

Residues 1–43 (MRPEVGREPAALQPRQRPRSDHQLHRSPFTVPPRTPACRSPGP) are disordered.

This is an uncharacterized protein from Homo sapiens (Human).